Here is a 401-residue protein sequence, read N- to C-terminus: Serine--glyoxylate aminotransferase (401 aa).

Met-1 is modified (N-acetylmethionine). Pyridoxal 5'-phosphate-binding positions include Thr-68–Thr-70, Thr-148, and Gln-200–Lys-201. Lys-201 contributes to the 3-hydroxypyruvate binding site. Lys-201 is modified (N6-(pyridoxal phosphate)lysine). The residue at position 204 (Ser-204) is a Phosphoserine. Residue Arg-347 participates in 3-hydroxypyruvate binding. Positions Ser-399–Ile-401 match the Microbody targeting signal motif.

Belongs to the class-V pyridoxal-phosphate-dependent aminotransferase family. In terms of assembly, forms homodimers. Interacts with RABGAP22. It depends on pyridoxal 5'-phosphate as a cofactor. In terms of tissue distribution, widely expressed. Preferentially expressed in green, leafy tissues, root cortex and epidermis, developing siliques and dry seeds.

It is found in the peroxisome. It carries out the reaction glyoxylate + L-serine = 3-hydroxypyruvate + glycine. The enzyme catalyses glyoxylate + L-alanine = glycine + pyruvate. The catalysed reaction is L-serine + pyruvate = 3-hydroxypyruvate + L-alanine. It catalyses the reaction 3-hydroxypyruvate + L-asparagine = 2-oxosuccinamate + L-serine. It carries out the reaction L-asparagine + glyoxylate = 2-oxosuccinamate + glycine. The enzyme catalyses L-asparagine + pyruvate = 2-oxosuccinamate + L-alanine. With respect to regulation, inhibited by aminooxyacetate and beta-chloro-L-alanine, but not by p-hydroxymercuribenzoate. Its function is as follows. Photorespiratory enzyme that catalyzes transamination reactions with multiple substrates, including asparagine. Functions exclusively as a catabolic enzyme in Asn metabolism. Involved in root development during seedling establishment after seed germination by regulating serine homeostasis and acetate conversion. The protein is Serine--glyoxylate aminotransferase of Arabidopsis thaliana (Mouse-ear cress).